We begin with the raw amino-acid sequence, 333 residues long: Phenylalanine--tRNA ligase alpha subunit (333 aa).

Glutamate 254 contributes to the Mg(2+) binding site.

The protein belongs to the class-II aminoacyl-tRNA synthetase family. Phe-tRNA synthetase alpha subunit type 1 subfamily. As to quaternary structure, tetramer of two alpha and two beta subunits. It depends on Mg(2+) as a cofactor.

It localises to the cytoplasm. The enzyme catalyses tRNA(Phe) + L-phenylalanine + ATP = L-phenylalanyl-tRNA(Phe) + AMP + diphosphate + H(+). The chain is Phenylalanine--tRNA ligase alpha subunit from Xylella fastidiosa (strain M23).